Reading from the N-terminus, the 288-residue chain is Homoserine kinase (288 aa).

Position 79–89 (79–89 (PPARGLGSSSA)) interacts with ATP.

This sequence belongs to the GHMP kinase family. Homoserine kinase subfamily.

It localises to the cytoplasm. It carries out the reaction L-homoserine + ATP = O-phospho-L-homoserine + ADP + H(+). Its pathway is amino-acid biosynthesis; L-threonine biosynthesis; L-threonine from L-aspartate: step 4/5. Catalyzes the ATP-dependent phosphorylation of L-homoserine to L-homoserine phosphate. This Listeria monocytogenes serovar 1/2a (strain ATCC BAA-679 / EGD-e) protein is Homoserine kinase.